The primary structure comprises 328 residues: Mitochondrial GTPase 1 (328 aa).

Residues 10 to 199 (KTTLKRLRDS…MVDTPGIMLP (190 aa)) form the CP-type G domain. Residues 57 to 60 (NKCD), 143 to 148 (NVGKSS), and G195 contribute to the GTP site.

It belongs to the TRAFAC class YlqF/YawG GTPase family. MTG1 subfamily.

Its subcellular location is the mitochondrion inner membrane. Mitochondrial GTPase involved in assembly of the large ribosomal subunit. Plays a role in expression of the mitochondrial translational machinery. The chain is Mitochondrial GTPase 1 from Schizosaccharomyces japonicus (strain yFS275 / FY16936) (Fission yeast).